Consider the following 127-residue polypeptide: Fatty acid binding protein 1-A, liver (127 aa).

Belongs to the calycin superfamily. Fatty-acid binding protein (FABP) family. In terms of tissue distribution, in adults, weakly expressed in the intestine.

Its subcellular location is the cytoplasm. Its function is as follows. Binds free fatty acids and their coenzyme A derivatives, bilirubin, and some other small molecules in the cytoplasm. May be involved in intracellular lipid transport. The polypeptide is Fatty acid binding protein 1-A, liver (Danio rerio (Zebrafish)).